Here is a 255-residue protein sequence, read N- to C-terminus: tRNA (guanine-N(7)-)-methyltransferase (255 aa).

The interval 1–21 (MMHDDPNEAGLPPHDDAIPDE) is disordered. Residues Glu86, Glu111, Asp138, and Asp161 each contribute to the S-adenosyl-L-methionine site. Asp161 is a catalytic residue. Substrate is bound by residues Lys165, Asp197, and 232–235 (TKFE).

Belongs to the class I-like SAM-binding methyltransferase superfamily. TrmB family.

The enzyme catalyses guanosine(46) in tRNA + S-adenosyl-L-methionine = N(7)-methylguanosine(46) in tRNA + S-adenosyl-L-homocysteine. It functions in the pathway tRNA modification; N(7)-methylguanine-tRNA biosynthesis. Its function is as follows. Catalyzes the formation of N(7)-methylguanine at position 46 (m7G46) in tRNA. The sequence is that of tRNA (guanine-N(7)-)-methyltransferase from Burkholderia lata (strain ATCC 17760 / DSM 23089 / LMG 22485 / NCIMB 9086 / R18194 / 383).